The chain runs to 109 residues: ATP synthase subunit c (109 aa).

Transmembrane regions (helical) follow at residues 42 to 62 (YIGT…QGFS) and 88 to 108 (LALA…IIFV).

The protein belongs to the ATPase C chain family. In terms of assembly, F-type ATPases have 2 components, F(1) - the catalytic core - and F(0) - the membrane proton channel. F(1) has five subunits: alpha(3), beta(3), gamma(1), delta(1), epsilon(1). F(0) has three main subunits: a(1), b(2) and c(10-14). The alpha and beta chains form an alternating ring which encloses part of the gamma chain. F(1) is attached to F(0) by a central stalk formed by the gamma and epsilon chains, while a peripheral stalk is formed by the delta and b chains.

The protein resides in the cell membrane. Functionally, f(1)F(0) ATP synthase produces ATP from ADP in the presence of a proton or sodium gradient. F-type ATPases consist of two structural domains, F(1) containing the extramembraneous catalytic core and F(0) containing the membrane proton channel, linked together by a central stalk and a peripheral stalk. During catalysis, ATP synthesis in the catalytic domain of F(1) is coupled via a rotary mechanism of the central stalk subunits to proton translocation. Key component of the F(0) channel; it plays a direct role in translocation across the membrane. A homomeric c-ring of between 10-14 subunits forms the central stalk rotor element with the F(1) delta and epsilon subunits. This chain is ATP synthase subunit c, found in Ureaplasma urealyticum serovar 10 (strain ATCC 33699 / Western).